A 278-amino-acid polypeptide reads, in one-letter code: UPF0758 protein BURPS1106A_0984 (278 aa).

The disordered stretch occupies residues 1–64; that stretch reads MQYEIVSAGE…ATAAARRGRD (64 aa). Residues 22-59 are compositionally biased toward low complexity; it reads AAAPAAPSSAVPSSAALSSAALSSAAQPTGAPPATAAA. The MPN domain occupies 156–278; that stretch reads LVDSPGAVDD…TFSFAQAGWI (123 aa). Zn(2+)-binding residues include histidine 227, histidine 229, and aspartate 240. Positions 227–240 match the JAMM motif motif; it reads HNHPSGAVRPSAAD.

The protein belongs to the UPF0758 family.

The chain is UPF0758 protein BURPS1106A_0984 from Burkholderia pseudomallei (strain 1106a).